Here is a 523-residue protein sequence, read N- to C-terminus: Sensory neuron membrane protein 1 (523 aa).

At 1-11 the chain is on the cytoplasmic side; sequence MQLPRELKYAA. The chain crosses the membrane as a helical span at residues 12–32; the sequence is IAGGVALFGLIFGWVLFPTIL. Residues 33–458 are Extracellular-facing; sequence KSQLKKEMAL…HQLFIPKRVV (426 aa). A glycan (N-linked (GlcNAc...) asparagine) is linked at Asn229. Cystine bridges form between Cys268-Cys333, Cys297-Cys352, and Cys335-Cys341. Residue Asn440 is glycosylated (N-linked (GlcNAc...) asparagine). The chain crosses the membrane as a helical span at residues 459–479; it reads GVLRWWMVSFGSLGAVIGIVF. Residues 480 to 523 are Cytoplasmic-facing; it reads HFRDHIMRLAVSGDTKVSKVIPEVEEQKDISVIGQAQEPAKVNI.

It belongs to the CD36 family.

The protein resides in the cell membrane. Functionally, plays an olfactory role that is not restricted to pheromone sensitivity. In Helicoverpa assulta (Oriental tobacco budworm), this protein is Sensory neuron membrane protein 1.